A 136-amino-acid polypeptide reads, in one-letter code: Large ribosomal subunit protein uL16 (136 aa).

Belongs to the universal ribosomal protein uL16 family. In terms of assembly, part of the 50S ribosomal subunit.

Its function is as follows. Binds 23S rRNA and is also seen to make contacts with the A and possibly P site tRNAs. In Pelagibacter ubique (strain HTCC1062), this protein is Large ribosomal subunit protein uL16.